The sequence spans 184 residues: Thylakoid membrane protein slr0575 (184 aa).

2 helical membrane-spanning segments follow: residues 5-25 (ISLAAVGLTVGGILTITGFVA) and 31-51 (ATLNLAGFFYGIPLVLGGLAL).

It localises to the cellular thylakoid membrane. This chain is Thylakoid membrane protein slr0575, found in Synechocystis sp. (strain ATCC 27184 / PCC 6803 / Kazusa).